The primary structure comprises 958 residues: MLKSKTFLKKTRAGGVMKIVREHYLRDDIGCGAPGCAACGGAHEGPALEPQPQDPASSVCPQPHYLLPDTNVLLHQIDVLEDPAIRNVIVLQTVLQEVRNRSAPVYKRIRDVTNNQEKHFYTFTNEHHRETYVEQEQGENANDRNDRAIRVAAKWYNEHLKKMSADNQLQVIFITNDRRNKEKAIEEGIPAFTCEEYVKSLTANPELIDRLACLSEEGNEIESGKIIFSEHLPLSKLQQGIKSGTYLQGTFRASRENYLEATVWIHGDNEENKEIILQGLKHLNRAVHEDIVAVELLPKSQWVAPSSVVLHDEGQNEEDVEKEEETERMLKTAVSEKMLKPTGRVVGIIKRNWRPYCGMLSKSDIKESRRHLFTPADKRIPRIRIETRQASTLEGRRIIVAIDGWPRNSRYPNGHFVRNLGDVGEKETETEVLLLEHDVPHQPFSQAVLSFLPKMPWSITEKDMKNREDLRHLCICSVDPPGCTDIDDALHCRELENGNLEVGVHIADVSHFIRPGNALDQESARRGTTVYLCEKRIDMVPELLSSNLCSLKCDVDRLAFSCIWEMNHNAEILKTKFTKSVINSKASLTYAEAQLRIDSANMNDDITTSLRGLNKLAKILKKRRIEKGALTLSSPEVRFHMDSETHDPIDLQTKELRETNSMVEEFMLLANISVAKKIHEEFSEHALLRKHPAPPPSNYEILVKAARSRNLEIKTDTAKSLAESLDQAESPTFPYLNTLLRILATRCMMQAVYFCSGMDNDFHHYGLASPIYTHFTSPIRRYADVIVHRLLAVAIGADCTYPELTDKHKLADICKNLNFRHKMAQYAQRASVAFHTQLFFKSKGIVSEEAYILFVRKNAIVVLIPKYGLEGTVFFEEKDKPNPQLIYDDEIPSLKIEDTVFHVFDKVKVKIMLDSSNLQHQKIRMSLVEPQIPGISIPTDTSNMDLNGPKKKKMKLGK.

N-acetylmethionine is present on methionine 1. Lysine 18 is subject to N6-acetyllysine. One can recognise a PINc domain in the interval 64 to 182; the sequence is HYLLPDTNVL…FITNDRRNKE (119 aa). The residue at position 215 (serine 215) is a Phosphoserine. The region spanning 227–319 is the CSD1 domain; sequence IFSEHLPLSK…LHDEGQNEED (93 aa). One can recognise a CSD2 domain in the interval 372–438; sequence LFTPADKRIP…ETEVLLLEHD (67 aa). The 326-residue stretch at 467-792 folds into the RNB domain; it reads REDLRHLCIC…ADVIVHRLLA (326 aa). Residues 938–958 are disordered; that stretch reads PTDTSNMDLNGPKKKKMKLGK. Residues 949-958 show a composition bias toward basic residues; the sequence is PKKKKMKLGK.

The protein belongs to the RNR ribonuclease family. Component of the RNA exosome complex; within the complex interacts with EXOSC4, EXOSC7 and EXOSC9 of the exosome core complex (Exo-9). The catalytically inactive RNA exosome core complex (Exo-9) associates with the catalytic subunit EXOSC10/RRP6. Exo-9 may associate with DIS3 to form the nucleolar exosome complex, or DIS3L to form the cytoplasmic exosome complex. Exo-9 is formed by a hexameric base ring consisting of the heterodimers EXOSC4-EXOSC9, EXOSC5-EXOSC8 and EXOSC6-EXOSC7, and a cap ring consisting of EXOSC1, EXOSC2 and EXOSC3; DIS3 associates with the base ring of Exo-9. The RNA exosome complex associates with cofactors C1D/RRP47, MPHOSPH6/MPP6 and MTREX/MTR4. Interacts with DHX34; the interaction is RNA-independent. Requires Mg(2+) as cofactor. Mn(2+) is required as a cofactor. Widely expressed.

The protein localises to the cytoplasm. It localises to the nucleus. Its subcellular location is the nucleolus. The protein resides in the nucleoplasm. In terms of biological role, putative catalytic component of the RNA exosome complex which has 3'-&gt;5' exoribonuclease activity and participates in a multitude of cellular RNA processing and degradation events. In the nucleus, the RNA exosome complex is involved in proper maturation of stable RNA species such as rRNA, snRNA and snoRNA, in the elimination of RNA processing by-products and non-coding 'pervasive' transcripts, such as antisense RNA species and promoter-upstream transcripts (PROMPTs), and of mRNAs with processing defects, thereby limiting or excluding their export to the cytoplasm. The RNA exosome may be involved in Ig class switch recombination (CSR) and/or Ig variable region somatic hypermutation (SHM) by targeting AICDA deamination activity to transcribed dsDNA substrates. In the cytoplasm, the RNA exosome complex is involved in general mRNA turnover and specifically degrades inherently unstable mRNAs containing AU-rich elements (AREs) within their 3' untranslated regions, and in RNA surveillance pathways, preventing translation of aberrant mRNAs. It seems to be involved in degradation of histone mRNA. DIS3 has both 3'-5' exonuclease and endonuclease activities. The protein is Exosome complex exonuclease RRP44 (DIS3) of Homo sapiens (Human).